The primary structure comprises 435 residues: Keratin, type I cytoskeletal 18 (435 aa).

A compositionally biased stretch (low complexity) spans 1-28; it reads MSLRSSYSVRSSTSQVPVSQMSQMSQMS. The interval 1–36 is disordered; that stretch reads MSLRSSYSVRSSTSQVPVSQMSQMSQMSIKRTTNVP. A head region spans residues 2 to 88; it reads SLRSSYSVRS…TGATGDIMGN (87 aa). The tract at residues 89–123 is coil 1A; it reads EKMAMQNLNDRLASYLRSETLEQANSKLELKIREA. The IF rod domain maps to 89-399; sequence EKMAMQNLND…RLLDGGDFKL (311 aa). Positions 124-140 are linker 1; that stretch reads LEKKGPEVCDYSRFQPI. The segment at 141–232 is coil 1B; that stretch reads IDDLRRKIFD…KNHDNEVMEL (92 aa). The interval 233-256 is linker 12; the sequence is RNQISHSGVQVDVDAPKGQDLAKI. The interval 257–394 is coil 2; it reads MEEIRSKYEK…IATYRRLLDG (138 aa). Residues 395–435 form a tail region; sequence GDFKLQDALEEQKRVKVMTVTQTLVDGKVVSSSTETKEKKF.

This sequence belongs to the intermediate filament family. As to quaternary structure, heterotetramer of two type I and two type II keratins. Keratin-18 associates with keratin-8. In terms of processing, phosphorylated. Post-translationally, proteolytically cleaved by caspases during epithelial cell apoptosis. As to expression, abundantly expressed in an even distribution throughout the optic nerve, localizing specifically to the astrocyte domains. Moderately expressed in spinal cord, brain, liver and oocytes.

Functionally, when phosphorylated, plays a role in filament reorganization. This is Keratin, type I cytoskeletal 18 (krt18) from Carassius auratus (Goldfish).